Consider the following 336-residue polypeptide: Holliday junction branch migration complex subunit RuvB (336 aa).

The tract at residues 4-184 (ADRLISAGAT…FGIVQRLEFY (181 aa)) is large ATPase domain (RuvB-L). Residues I23, R24, G65, K68, T69, T70, 131–133 (EDY), R174, Y184, and R221 each bind ATP. T69 contacts Mg(2+). The interval 185–255 (QVPDLQHIVG…IAAQALDMLN (71 aa)) is small ATPAse domain (RuvB-S). The head domain (RuvB-H) stretch occupies residues 258 to 336 (AEGFDYMDRK…HFGITPPEMP (79 aa)). R294, R313, and R318 together coordinate DNA.

It belongs to the RuvB family. As to quaternary structure, homohexamer. Forms an RuvA(8)-RuvB(12)-Holliday junction (HJ) complex. HJ DNA is sandwiched between 2 RuvA tetramers; dsDNA enters through RuvA and exits via RuvB. An RuvB hexamer assembles on each DNA strand where it exits the tetramer. Each RuvB hexamer is contacted by two RuvA subunits (via domain III) on 2 adjacent RuvB subunits; this complex drives branch migration. In the full resolvosome a probable DNA-RuvA(4)-RuvB(12)-RuvC(2) complex forms which resolves the HJ.

The protein resides in the cytoplasm. The catalysed reaction is ATP + H2O = ADP + phosphate + H(+). Functionally, the RuvA-RuvB-RuvC complex processes Holliday junction (HJ) DNA during genetic recombination and DNA repair, while the RuvA-RuvB complex plays an important role in the rescue of blocked DNA replication forks via replication fork reversal (RFR). RuvA specifically binds to HJ cruciform DNA, conferring on it an open structure. The RuvB hexamer acts as an ATP-dependent pump, pulling dsDNA into and through the RuvAB complex. RuvB forms 2 homohexamers on either side of HJ DNA bound by 1 or 2 RuvA tetramers; 4 subunits per hexamer contact DNA at a time. Coordinated motions by a converter formed by DNA-disengaged RuvB subunits stimulates ATP hydrolysis and nucleotide exchange. Immobilization of the converter enables RuvB to convert the ATP-contained energy into a lever motion, pulling 2 nucleotides of DNA out of the RuvA tetramer per ATP hydrolyzed, thus driving DNA branch migration. The RuvB motors rotate together with the DNA substrate, which together with the progressing nucleotide cycle form the mechanistic basis for DNA recombination by continuous HJ branch migration. Branch migration allows RuvC to scan DNA until it finds its consensus sequence, where it cleaves and resolves cruciform DNA. This Salmonella agona (strain SL483) protein is Holliday junction branch migration complex subunit RuvB.